The chain runs to 870 residues: Probable inorganic carbon transporter subunit DabA (870 aa).

Cys381, Asp383, His564, and Cys579 together coordinate Zn(2+).

This sequence belongs to the inorganic carbon transporter (TC 9.A.2) DabA family. Forms a complex with DabB. Zn(2+) is required as a cofactor.

The protein localises to the cell membrane. Its function is as follows. Part of an energy-coupled inorganic carbon pump. The protein is Probable inorganic carbon transporter subunit DabA of Geobacillus kaustophilus (strain HTA426).